A 269-amino-acid chain; its full sequence is 4-hydroxy-tetrahydrodipicolinate reductase (269 aa).

Residues 8 to 13 (GAAGRM) and glutamate 34 contribute to the NAD(+) site. Position 35 (arginine 35) interacts with NADP(+). Residues 98 to 100 (GTT) and 122 to 125 (APNY) each bind NAD(+). The active-site Proton donor/acceptor is the histidine 155. Position 156 (histidine 156) interacts with (S)-2,3,4,5-tetrahydrodipicolinate. Lysine 159 serves as the catalytic Proton donor. (S)-2,3,4,5-tetrahydrodipicolinate is bound at residue 165–166 (GT).

This sequence belongs to the DapB family.

The protein localises to the cytoplasm. The enzyme catalyses (S)-2,3,4,5-tetrahydrodipicolinate + NAD(+) + H2O = (2S,4S)-4-hydroxy-2,3,4,5-tetrahydrodipicolinate + NADH + H(+). It catalyses the reaction (S)-2,3,4,5-tetrahydrodipicolinate + NADP(+) + H2O = (2S,4S)-4-hydroxy-2,3,4,5-tetrahydrodipicolinate + NADPH + H(+). The protein operates within amino-acid biosynthesis; L-lysine biosynthesis via DAP pathway; (S)-tetrahydrodipicolinate from L-aspartate: step 4/4. In terms of biological role, catalyzes the conversion of 4-hydroxy-tetrahydrodipicolinate (HTPA) to tetrahydrodipicolinate. This is 4-hydroxy-tetrahydrodipicolinate reductase from Vibrio vulnificus (strain CMCP6).